The chain runs to 476 residues: GTPase Der (476 aa).

2 consecutive EngA-type G domains span residues phenylalanine 3 to arginine 167 and leucine 205 to asparagine 380. GTP is bound by residues glycine 9–serine 16, aspartate 56–leucine 60, asparagine 119–glutamate 122, glycine 211–serine 218, aspartate 258–methionine 262, and asparagine 323–aspartate 326. One can recognise a KH-like domain in the interval arginine 381–glutamate 465.

Belongs to the TRAFAC class TrmE-Era-EngA-EngB-Septin-like GTPase superfamily. EngA (Der) GTPase family. As to quaternary structure, associates with the 50S ribosomal subunit.

In terms of biological role, GTPase that plays an essential role in the late steps of ribosome biogenesis. The sequence is that of GTPase Der from Rhizobium meliloti (strain 1021) (Ensifer meliloti).